A 622-amino-acid polypeptide reads, in one-letter code: MALLQISEPGMAPAPHQRRLAVGIDLGTTNSLVAAVRNSIPEALPDDTGRVLLPSVVRYLEKGGRRIGHAAKEEAAIDPRNTIVSVKRFMGRGKAEVEGAANAPYEFVDAPGMVQIRTVDGVKSPVEVSAEILATLRQRAEDTLGDDLVGAVITVPAYFDDAQRQATKDAARLAGLNVLRLLNEPTAAAIAYGLDNGAEGLYAVYDLGGGTFDLSILKLTKGVFEVLAAGGDSALGGDDFDHLLFAHVLVQAGLDAAALAPEDVRLLLDRVRGVKEALSAAQQAQLDVKLSTGEKLVQTITRDTFAALVEPLVQRTLAPTRKALRDARVSAADIKGVVLVGGATRMPVIRDAVEKYFGQPPLVNLDPDQVVALGAAIQADLLAGNRSGGDDWLLLDVIPLSLGVETMGGLVEKIIPRNSTIPVARAQEFTTFKDGQTAMAIHVVQGERELVSDCRSLARFELRGIPPMAAGAARIRVTYQVDADGLLSVFAREQHSGVEASVVVKPSYGLGDDDIARMLEDSFKTAEVDMRARALREAQVEAQRLVEATEAALAADGDLLDASERATVEALVASLRALAPGDDANAIDAATKALAEGTDEFAARRMNKSIKRALAGRKLDEI.

Belongs to the heat shock protein 70 family.

Its function is as follows. Chaperone involved in the maturation of iron-sulfur cluster-containing proteins. Has a low intrinsic ATPase activity which is markedly stimulated by HscB. The chain is Chaperone protein HscA homolog from Burkholderia thailandensis (strain ATCC 700388 / DSM 13276 / CCUG 48851 / CIP 106301 / E264).